The sequence spans 216 residues: Transmembrane emp24 domain-containing protein eca (216 aa).

The N-terminal stretch at 1-20 (MRDQFISLALILCVLHSACG) is a signal peptide. Residues 21 to 182 (LYFHISETER…FRHTSESTNS (162 aa)) lie on the Lumenal side of the membrane. One can recognise a GOLD domain in the interval 30-126 (RKCFIEEVPD…QLRVHLDIQV (97 aa)). Residues 134-164 (AHVAQKEKLTELQLRIRQLLDQVEQITKEQN) are a coiled coil. The helical transmembrane segment at 183-203 (RVLWWSLAQTVVLVCMGFWQM) threads the bilayer. At 204–216 (RHLKSFFEAKKLV) the chain is on the cytoplasmic side. Positions 213–216 (KKLV) match the Prevents secretion from ER motif.

This sequence belongs to the EMP24/GP25L family.

The protein resides in the endoplasmic reticulum membrane. Eca and bai are essential, though not redundant, for dorsoventral patterning of the embryo. Specifically required during early embryogenesis for the activity of maternal tkv, while the zygotic tkv is not affected. Involved in Golgi organization. The sequence is that of Transmembrane emp24 domain-containing protein eca from Drosophila melanogaster (Fruit fly).